A 366-amino-acid chain; its full sequence is Phospho-N-acetylmuramoyl-pentapeptide-transferase (366 aa).

10 helical membrane-spanning segments follow: residues Q3 to I23, I55 to A75, F80 to A100, A118 to P138, I161 to V181, L197 to F217, I238 to A258, I262 to V282, V290 to F310, and F341 to L361.

This sequence belongs to the glycosyltransferase 4 family. MraY subfamily. Mg(2+) serves as cofactor.

The protein localises to the cell membrane. It carries out the reaction UDP-N-acetyl-alpha-D-muramoyl-L-alanyl-gamma-D-glutamyl-meso-2,6-diaminopimeloyl-D-alanyl-D-alanine + di-trans,octa-cis-undecaprenyl phosphate = di-trans,octa-cis-undecaprenyl diphospho-N-acetyl-alpha-D-muramoyl-L-alanyl-D-glutamyl-meso-2,6-diaminopimeloyl-D-alanyl-D-alanine + UMP. Its pathway is cell wall biogenesis; peptidoglycan biosynthesis. In terms of biological role, catalyzes the initial step of the lipid cycle reactions in the biosynthesis of the cell wall peptidoglycan: transfers peptidoglycan precursor phospho-MurNAc-pentapeptide from UDP-MurNAc-pentapeptide onto the lipid carrier undecaprenyl phosphate, yielding undecaprenyl-pyrophosphoryl-MurNAc-pentapeptide, known as lipid I. This chain is Phospho-N-acetylmuramoyl-pentapeptide-transferase, found in Corynebacterium efficiens (strain DSM 44549 / YS-314 / AJ 12310 / JCM 11189 / NBRC 100395).